Consider the following 298-residue polypeptide: MRYFPLLLCLLAITTAEFRNATKQVPVVMWHGMGDCCCNPLSMGSVKKLFEEQIPGVYVHSLQLGSSITKDIEHGFYANTNELVYMACIKIKNDPELKNGYNAIGFSQGAQFLRAVAQRCPNPPMKNLVSVGGQHQGVFGAPYCIGDNIMCNGVRRLIDLGAYLPFVQKRVVQAQYWHDPNQVEEYKKRSIFLADINNENNNNPTYKRNLLSLKNLVLVKFNQDHMVVPKDSSWFGFYKDGDIDTILPMNETDLYKEDRIGLKKLHESGRIHFMDVDGDHLQIPRSVLVNDIIKKYFM.

The signal sequence occupies residues methionine 1 to alanine 16. Asparagine 20 carries an N-linked (GlcNAc...) asparagine glycan. 3 cysteine pairs are disulfide-bonded: cysteine 37–cysteine 38, cysteine 88–cysteine 120, and cysteine 144–cysteine 151. Serine 107 serves as the catalytic Nucleophile. The active site involves aspartate 224. Asparagine 250 is a glycosylation site (N-linked (GlcNAc...) asparagine). Histidine 280 is a catalytic residue.

It belongs to the palmitoyl-protein thioesterase family.

It catalyses the reaction S-hexadecanoyl-L-cysteinyl-[protein] + H2O = L-cysteinyl-[protein] + hexadecanoate + H(+). Removes thioester-linked fatty acyl groups such as palmitate (hexadecanoate) from modified cysteine residues in proteins or peptides. The protein is Palmitoyl-protein thioesterase 1 (ppt-1) of Caenorhabditis elegans.